A 499-amino-acid chain; its full sequence is Bifunctional purine biosynthesis protein PurH (499 aa).

An MGS-like domain is found at 1–144 (MIKRALISVF…KNFKDVVVLT (144 aa)).

The protein belongs to the PurH family.

The catalysed reaction is (6R)-10-formyltetrahydrofolate + 5-amino-1-(5-phospho-beta-D-ribosyl)imidazole-4-carboxamide = 5-formamido-1-(5-phospho-D-ribosyl)imidazole-4-carboxamide + (6S)-5,6,7,8-tetrahydrofolate. It catalyses the reaction IMP + H2O = 5-formamido-1-(5-phospho-D-ribosyl)imidazole-4-carboxamide. It functions in the pathway purine metabolism; IMP biosynthesis via de novo pathway; 5-formamido-1-(5-phospho-D-ribosyl)imidazole-4-carboxamide from 5-amino-1-(5-phospho-D-ribosyl)imidazole-4-carboxamide (10-formyl THF route): step 1/1. Its pathway is purine metabolism; IMP biosynthesis via de novo pathway; IMP from 5-formamido-1-(5-phospho-D-ribosyl)imidazole-4-carboxamide: step 1/1. In Clostridium botulinum (strain 657 / Type Ba4), this protein is Bifunctional purine biosynthesis protein PurH.